A 943-amino-acid chain; its full sequence is Lactoferrin-binding protein A (943 aa).

A signal peptide spans 1-27 (MNKKHGFPLTLTALAIATAFPAYAAQA). Residues 52–178 (RRSKEATGLG…LGGAVAFRTK (127 aa)) form the TBDR plug domain. Residues 189 to 943 (SWGIQAKTAY…NFSLALEMKF (755 aa)) form the TBDR beta-barrel domain. The short motif at 926–943 (GRYAAPGRNFSLALEMKF) is the TonB C-terminal box element.

It belongs to the TonB-dependent receptor family.

The protein localises to the cell outer membrane. Unknown. May be an iron-siderophore receptor. This Neisseria meningitidis serogroup B (strain ATCC BAA-335 / MC58) protein is Lactoferrin-binding protein A (lbpA).